An 86-amino-acid polypeptide reads, in one-letter code: Large ribosomal subunit protein bL27 (86 aa).

The disordered stretch occupies residues M1–K24.

The protein belongs to the bacterial ribosomal protein bL27 family.

The protein is Large ribosomal subunit protein bL27 of Magnetococcus marinus (strain ATCC BAA-1437 / JCM 17883 / MC-1).